Here is a 116-residue protein sequence, read N- to C-terminus: Putative pterin-4-alpha-carbinolamine dehydratase (116 aa).

Belongs to the pterin-4-alpha-carbinolamine dehydratase family.

The catalysed reaction is (4aS,6R)-4a-hydroxy-L-erythro-5,6,7,8-tetrahydrobiopterin = (6R)-L-erythro-6,7-dihydrobiopterin + H2O. In Stenotrophomonas maltophilia (strain R551-3), this protein is Putative pterin-4-alpha-carbinolamine dehydratase.